Here is a 250-residue protein sequence, read N- to C-terminus: Urease accessory protein UreD (250 aa).

Belongs to the UreD family. As to quaternary structure, ureD, UreF and UreG form a complex that acts as a GTP-hydrolysis-dependent molecular chaperone, activating the urease apoprotein by helping to assemble the nickel containing metallocenter of UreC. The UreE protein probably delivers the nickel.

The protein resides in the cytoplasm. Required for maturation of urease via the functional incorporation of the urease nickel metallocenter. This Aliarcobacter butzleri (strain RM4018) (Arcobacter butzleri) protein is Urease accessory protein UreD.